The chain runs to 339 residues: Geranylgeranyl pyrophosphate synthase AN1592 (339 aa).

Positions 41, 44, and 73 each coordinate isopentenyl diphosphate. Mg(2+) is bound by residues Asp-80 and Asp-84. Arg-89 contacts dimethylallyl diphosphate. Arg-90 provides a ligand contact to isopentenyl diphosphate. The dimethylallyl diphosphate site is built by Lys-192, Thr-193, and Gln-228. Asp-231 contributes to the Mg(2+) binding site. The dimethylallyl diphosphate site is built by Asn-235, Lys-245, and Lys-255.

The protein belongs to the FPP/GGPP synthase family. Mg(2+) serves as cofactor.

The enzyme catalyses isopentenyl diphosphate + dimethylallyl diphosphate = (2E)-geranyl diphosphate + diphosphate. It catalyses the reaction isopentenyl diphosphate + (2E)-geranyl diphosphate = (2E,6E)-farnesyl diphosphate + diphosphate. It carries out the reaction isopentenyl diphosphate + (2E,6E)-farnesyl diphosphate = (2E,6E,10E)-geranylgeranyl diphosphate + diphosphate. The protein operates within secondary metabolite biosynthesis. Functionally, geranylgeranyl pyrophosphate synthase; part of the gene cluster that mediates the biosynthesis of erinacines, cyathane-xylosides that show unique biological activities, including leishmanicidal activity, stimulating activity for nerve growth-factor synthesis, and agonistic activity toward the kappa opioid receptor. The geranylgeranyl diphosphate (GGPP) synthase eriE catalyzes the first step in erinacines biosynthesis via conversion of farnesyl pyrophosphate and isopentyl pyrophosphate into geranylgeranyl pyrophosphate (GGPP). GGPP is then substrate of the diterpene cyclase eriG for the production of cyatha-3,12-diene. The cytochrome P450 monooxygenase eriI then hydroxylates cyatha-3,12-diene at C-14 of the seven-membered ring to produce erinacol, which is further hydroxylated at C-15 by the cytochrome P450 monooxygenase eriC to yield cyathadiol. The cytochrome P450 monooxygenase eriA then catalyzes C-11 hydroxylation in the presence of the short chain dehydrogenase/reductase (SDR) eriH, which leads to the production of cyathatriol. The acetyltransferase eriL converts cyathatriol into 11-O-acetyl-cyathatriol. The SDR eriH catalyzes further oxidation of 11-O-acetyl-cyathatriol into 1-O-acetylcyathin A3. Finally, the glycosyl transferase eriJ tranfers xylose from UDP-xylose onto C-14 of 11-O-acetyl-cyathatriol to form eracine Q. EriJ is also able to convert 11-O-acetyl-cyathatriol to eracine Q2 by using UDP-D-glucose as cosubstrate, but at a lower rate. In the absence of eriL and eriJ, the SDR eriH is able to convert cyathatriol to cyathin A3; this is likely a switching mechanism in the biosynthesis of cyathins (C-14 ketogroup)and erinacines (C-14 glycosylated group). The roles of the SDR eriB, the polyprenyl transferase eriF and the dehydrogenase eriK have still to be identified. The sequence is that of Geranylgeranyl pyrophosphate synthase AN1592 from Hericium erinaceus (Lion's mane mushroom).